Consider the following 403-residue polypeptide: Poly(rC)-binding protein 4 (403 aa).

KH domains follow at residues 17-67, 101-154, and 241-293; these read TLTL…TITG, PVTL…TVSG, and TSSQ…TITG.

It is found in the cytoplasm. Functionally, single-stranded nucleic acid binding protein that binds preferentially to oligo dC. The chain is Poly(rC)-binding protein 4 (PCBP4) from Homo sapiens (Human).